Here is a 140-residue protein sequence, read N- to C-terminus: Small ribosomal subunit protein uS19 (140 aa).

Positions 43 to 71 (IERGLTTEQQKLRETVRDADPQKTANDPI) are disordered. Residues 52–63 (QKLRETVRDADP) show a composition bias toward basic and acidic residues.

The protein belongs to the universal ribosomal protein uS19 family.

Its function is as follows. Protein S19 forms a complex with S13 that binds strongly to the 16S ribosomal RNA. This chain is Small ribosomal subunit protein uS19, found in Haloquadratum walsbyi (strain DSM 16790 / HBSQ001).